A 182-amino-acid polypeptide reads, in one-letter code: Ribosome maturation factor RimM (182 aa).

The region spanning 102 to 182 (EEGDYYWKDL…TIEVDWDPGF (81 aa)) is the PRC barrel domain.

The protein belongs to the RimM family. As to quaternary structure, binds ribosomal protein uS19.

It localises to the cytoplasm. Functionally, an accessory protein needed during the final step in the assembly of 30S ribosomal subunit, possibly for assembly of the head region. Essential for efficient processing of 16S rRNA. May be needed both before and after RbfA during the maturation of 16S rRNA. It has affinity for free ribosomal 30S subunits but not for 70S ribosomes. The protein is Ribosome maturation factor RimM of Salmonella gallinarum (strain 287/91 / NCTC 13346).